We begin with the raw amino-acid sequence, 410 residues long: Translation initiation factor 2 subunit gamma (410 aa).

The region spanning 6-203 (QSEVNIGMVG…AIQEFIPTPK (198 aa)) is the tr-type G domain. Residues 15–22 (GHVDHGKT) form a G1 region. Mg(2+)-binding residues include aspartate 18, threonine 22, glycine 43, and serine 45. Residue 18–23 (DHGKTS) participates in GTP binding. The segment at 43–47 (GISIR) is G2. Zn(2+) contacts are provided by cysteine 58, cysteine 61, cysteine 73, and cysteine 76. Positions 90–93 (DAPG) are G3. GTP is bound by residues 146 to 149 (NKID) and 181 to 183 (SAH). The tract at residues 146–149 (NKID) is G4. Positions 181 to 183 (SAH) are G5.

Belongs to the TRAFAC class translation factor GTPase superfamily. Classic translation factor GTPase family. EIF2G subfamily. Heterotrimer composed of an alpha, a beta and a gamma chain. Mg(2+) serves as cofactor.

The catalysed reaction is GTP + H2O = GDP + phosphate + H(+). Its function is as follows. eIF-2 functions in the early steps of protein synthesis by forming a ternary complex with GTP and initiator tRNA. The polypeptide is Translation initiation factor 2 subunit gamma (Methanococcus vannielii (strain ATCC 35089 / DSM 1224 / JCM 13029 / OCM 148 / SB)).